Reading from the N-terminus, the 181-residue chain is Nucleoside diphosphate kinase, mitochondrial (181 aa).

Residues 1–10 (MFRGGTHRLR) are compositionally biased toward basic residues. A disordered region spans residues 1–22 (MFRGGTHRLRGQPGLSLPHGPR). The transit peptide at 1 to 24 (MFRGGTHRLRGQPGLSLPHGPRCY) directs the protein to the mitochondrion. ATP contacts are provided by K40, F88, R116, T122, R133, and N143. The active-site Pros-phosphohistidine intermediate is H146.

Belongs to the NDK family. Mg(2+) serves as cofactor. As to expression, highest levels in the liver and kidney with lower levels in the heart, brain and breast muscle.

It localises to the mitochondrion intermembrane space. Its subcellular location is the mitochondrion matrix. It carries out the reaction a 2'-deoxyribonucleoside 5'-diphosphate + ATP = a 2'-deoxyribonucleoside 5'-triphosphate + ADP. The catalysed reaction is a ribonucleoside 5'-diphosphate + ATP = a ribonucleoside 5'-triphosphate + ADP. Its activity is regulated as follows. Feedback inhibition by ADP. Its function is as follows. Major role in the synthesis of nucleoside triphosphates other than ATP. The ATP gamma phosphate is transferred to the NDP beta phosphate via a ping-pong mechanism, using a phosphorylated active-site intermediate. Through the catalyzed exchange of gamma-phosphate between di- and triphosphonucleosides participates in regulation of intracellular nucleotide homeostasis. Binds to anionic phospholipids, predominantly to cardiolipin; the binding inhibits its phosphotransfer activity. Acts as a mitochondria-specific NDK coupled to respiration. Promotes the redistribution of cardiolipin between the mitochondrial inner membrane and outer membrane which is implicated in pro-apoptotic signaling. This Columba livia (Rock dove) protein is Nucleoside diphosphate kinase, mitochondrial (NME4).